We begin with the raw amino-acid sequence, 162 residues long: uncharacterized protein (162 aa).

Helical transmembrane passes span Ala28 to Phe50, Leu57 to Leu76, and Tyr108 to Ala130.

It localises to the cell membrane. This is an uncharacterized protein from Treponema pallidum (strain Nichols).